The following is a 317-amino-acid chain: DNA repair nuclease/redox regulator APEX1 (317 aa).

A disordered region spans residues 1 to 58 (MPKRGKKAAADDGEEPKSEPETKKSKGAAKKTEKEAAGEGPVLYEDPPDQKTSPSGKS). Residues 2–32 (PKRGKKAAADDGEEPKSEPETKKSKGAAKKT) form a necessary for interaction with YBX1, binding to RNA, association together with NPM1 to rRNA, endoribonuclease activity on abasic RNA and localization in the nucleoli region. Lys6 and Lys7 each carry N6-acetyllysine; by EP300. A Nuclear localization signal (NLS) motif is present at residues 8–12 (AAADD). The span at 15-37 (EPKSEPETKKSKGAAKKTEKEAA) shows a compositional bias: basic and acidic residues. Residue Ser18 is modified to Phosphoserine. The necessary for interaction with NPM1 and for efficient rRNA binding stretch occupies residues 22 to 32 (TKKSKGAAKKT). N6-acetyllysine occurs at positions 26, 30, 31, and 34. The residue at position 53 (Ser53) is a Phosphoserine. The Nuclear export signal (NES) motif lies at 63–79 (ICSWNVDGLRAWIKKKG). Cys64 is subject to S-nitrosocysteine; alternate. A disulfide bond links Cys64 and Cys92. Position 69 (Asp69) interacts with Mg(2+). The residue at position 92 (Cys92) is an S-nitrosocysteine; alternate. Residue Glu95 coordinates Mg(2+). Tyr170 is a catalytic residue. The residue at position 196 (Lys196) is an N6-acetyllysine. Mg(2+) is bound by residues Asp209 and Asn211. Asp209 acts as the Proton donor/acceptor in catalysis. Position 232 is a phosphothreonine; by CDK5 (Thr232). Residues 288–317 (HSLLPALCDSKIRSKALGSDHCPITLYLAL) are mitochondrial targeting sequence (MTS). Asp307 lines the Mg(2+) pocket. Cys309 carries the S-nitrosocysteine modification.

Belongs to the DNA repair enzymes AP/ExoA family. In terms of assembly, monomer. Homodimer; disulfide-linked. Component of the SET complex, composed of at least APEX1, SET, ANP32A, HMGB2, NME1 and TREX1. Associates with the dimer XRCC5/XRCC6 in a DNA-dependent manner. Interacts with SIRT1; the interaction is increased in the context of genotoxic stress. Interacts with HDAC1, HDAC2 and HDAC3; the interactions are not dependent on the APEX1 acetylation status. Interacts with XRCC1; the interaction is induced by SIRT1 and increased with the APEX1 acetylated form. Interacts with NPM1 (via N-terminal domain); the interaction is RNA-dependent and decreases in hydrogen peroxide-damaged cells. Interacts (via N-terminus) with YBX1 (via C-terminus); the interaction is increased in presence of APEX1 acetylated at Lys-6 and Lys-7. Interacts with HNRNPL; the interaction is DNA-dependent. Interacts (via N-terminus) with KPNA1 and KPNA2. Interacts with TXN; the interaction stimulates the FOS/JUN AP-1 complex DNA-binding activity in a redox-dependent manner. Interacts with GZMA, KRT8, MDM2, POLB, PRDX6, PRPF19, RPLP0, TOMM20 and WDR77. Binds to CDK5. Mg(2+) is required as a cofactor. It depends on Mn(2+) as a cofactor. Phosphorylated. Phosphorylation by kinase PKC or casein kinase CK2 results in enhanced redox activity that stimulates binding of the FOS/JUN AP-1 complex to its cognate binding site. AP-endodeoxyribonuclease activity is not affected by CK2-mediated phosphorylation. Phosphorylation of Thr-232 by CDK5 in response to MPP(+)/MPTP (1-methyl-4-phenylpyridinium) reduces AP-endodeoxyribonuclease activity resulting in accumulation of DNA damage and contributing to neuronal death. In terms of processing, acetylated on Lys-6 and Lys-7. Acetylation is increased by the transcriptional coactivator EP300 acetyltransferase, genotoxic agents like H(2)O(2) and methyl methanesulfonate (MMS). Acetylation increases its binding affinity to the negative calcium response element (nCaRE) DNA promoter. The acetylated form induces a stronger binding of YBX1 to the Y-box sequence in the MDR1 promoter than the unacetylated form. Deacetylated on lysines. Lys-6 and Lys-7 are deacetylated by SIRT1. Post-translationally, cleaved at Lys-30 by granzyme A to create the mitochondrial form; leading in reduction of binding to DNA, AP endodeoxyribonuclease activity, redox activation of transcription factors and to enhanced cell death. Cleaved by granzyme K; leading to intracellular ROS accumulation and enhanced cell death after oxidative stress. Cys-64 and Cys-92 are nitrosylated in response to nitric oxide (NO) and lead to the exposure of the nuclear export signal (NES). In terms of processing, ubiquitinated by MDM2; leading to translocation to the cytoplasm and proteasomal degradation. In terms of tissue distribution, expressed in both resting and stimulated B cells stimulated to switch (at protein level).

Its subcellular location is the nucleus. It localises to the nucleolus. It is found in the nucleus speckle. The protein resides in the endoplasmic reticulum. The protein localises to the cytoplasm. Its subcellular location is the mitochondrion. The catalysed reaction is a deoxyribonucleotide-2'-deoxyribose-5'-monophosphate-DNA + H2O = a 5'-end 2'-deoxyribose-5'-monophosphate-DNA + a 3'-end 2'-deoxyribonucleotide-DNA + H(+). It carries out the reaction Exonucleolytic cleavage in the 3'- to 5'-direction to yield nucleoside 5'-phosphates.. It catalyses the reaction a 3'-end 2'-deoxyribonucleotide-3'-phosphoglycolate-DNA + H2O = 2-phosphoglycolate + a 3'-end 2'-deoxyribonucleotide-DNA + H(+). The enzyme catalyses a 3'-end 2'-deoxyribonucleotide-8-oxoguanine-DNA + H2O = 8-oxo-dGMP + a 3'-end 2'-deoxyribonucleotide-DNA + H(+). Its activity is regulated as follows. NPM1 stimulates endodeoxyribonuclease activity on double-stranded DNA with AP sites, but inhibits endoribonuclease activity on single-stranded RNA containing AP sites. Its function is as follows. Multifunctional protein that plays a central role in the cellular response to oxidative stress. The two major activities of APEX1 are DNA repair and redox regulation of transcriptional factors. Functions as an apurinic/apyrimidinic (AP) endodeoxyribonuclease in the base excision repair (BER) pathway of DNA lesions induced by oxidative and alkylating agents. Initiates repair of AP sites in DNA by catalyzing hydrolytic incision of the phosphodiester backbone immediately adjacent to the damage, generating a single-strand break with 5'-deoxyribose phosphate and 3'-hydroxyl ends. Also incises at AP sites in the DNA strand of DNA/RNA hybrids, single-stranded DNA regions of R-loop structures, and single-stranded RNA molecules. Operates at switch sites of immunoglobulin (Ig) constant regions where it mediates Ig isotype class switch recombination. Processes AP sites induced by successive action of AICDA and UNG. Generates staggered nicks in opposite DNA strands resulting in the formation of double-strand DNA breaks that are finally resolved via non-homologous end joining repair pathway. Has 3'-5' exodeoxyribonuclease activity on mismatched deoxyribonucleotides at the 3' termini of nicked or gapped DNA molecules during short-patch BER. Possesses DNA 3' phosphodiesterase activity capable of removing lesions (such as phosphoglycolate and 8-oxoguanine) blocking the 3' side of DNA strand breaks. Also acts as an endoribonuclease involved in the control of single-stranded RNA metabolism. Plays a role in regulating MYC mRNA turnover by preferentially cleaving in between UA and CA dinucleotides of the MYC coding region determinant (CRD). In association with NMD1, plays a role in the rRNA quality control process during cell cycle progression. Acts as a loading factor for POLB onto non-incised AP sites in DNA and stimulates the 5'-terminal deoxyribose 5'-phosphate (dRp) excision activity of POLB. Exerts reversible nuclear redox activity to regulate DNA binding affinity and transcriptional activity of transcriptional factors by controlling the redox status of their DNA-binding domain, such as the FOS/JUN AP-1 complex after exposure to IR. Involved in calcium-dependent down-regulation of parathyroid hormone (PTH) expression by binding to negative calcium response elements (nCaREs). Together with HNRNPL or the dimer XRCC5/XRCC6, associates with nCaRE, acting as an activator of transcriptional repression. May also play a role in the epigenetic regulation of gene expression by participating in DNA demethylation. Stimulates the YBX1-mediated MDR1 promoter activity, when acetylated at Lys-6 and Lys-7, leading to drug resistance. Plays a role in protection from granzyme-mediated cellular repair leading to cell death. Binds DNA and RNA. Associates, together with YBX1, on the MDR1 promoter. Together with NPM1, associates with rRNA. The chain is DNA repair nuclease/redox regulator APEX1 (Apex1) from Mus musculus (Mouse).